Here is a 204-residue protein sequence, read N- to C-terminus: UPF0637 protein USA300HOU_1046.1 (204 aa).

It belongs to the UPF0637 family.

The polypeptide is UPF0637 protein USA300HOU_1046.1 (Staphylococcus aureus (strain USA300 / TCH1516)).